Reading from the N-terminus, the 519-residue chain is Sensor protein RprX (519 aa).

The next 2 helical transmembrane spans lie at 5-25 (TIWILGIIMGLSFLSLLYLQV) and 260-280 (IPSMIFTIVLLITFIFTIYIV). In terms of domain architecture, Histidine kinase spans 296 to 517 (NMTHEFKTPI…KFIIALPLLK (222 aa)). Residue H299 is modified to Phosphohistidine; by autocatalysis.

It localises to the cell membrane. It catalyses the reaction ATP + protein L-histidine = ADP + protein N-phospho-L-histidine.. Functionally, member of the two-component regulatory system RprX/RprY. May activate RprY by phosphorylation. The protein is Sensor protein RprX (rprX) of Bacteroides fragilis (strain YCH46).